We begin with the raw amino-acid sequence, 336 residues long: Ribosomal RNA large subunit methyltransferase F (336 aa).

This sequence belongs to the methyltransferase superfamily. METTL16/RlmF family.

It localises to the cytoplasm. The enzyme catalyses adenosine(1618) in 23S rRNA + S-adenosyl-L-methionine = N(6)-methyladenosine(1618) in 23S rRNA + S-adenosyl-L-homocysteine + H(+). Functionally, specifically methylates the adenine in position 1618 of 23S rRNA. In Yersinia pestis bv. Antiqua (strain Nepal516), this protein is Ribosomal RNA large subunit methyltransferase F.